Here is a 181-residue protein sequence, read N- to C-terminus: CDP-archaeol synthase (181 aa).

The next 5 membrane-spanning stretches (helical) occupy residues 7-27, 55-75, 80-100, 128-148, and 150-170; these read VVVA…AVLA, AVGT…RPAA, GVVL…GAMV, FVVV…GDTF, and LPVL…TNGI.

This sequence belongs to the CDP-archaeol synthase family. Mg(2+) is required as a cofactor.

It is found in the cell membrane. It catalyses the reaction 2,3-bis-O-(geranylgeranyl)-sn-glycerol 1-phosphate + CTP + H(+) = CDP-2,3-bis-O-(geranylgeranyl)-sn-glycerol + diphosphate. It participates in membrane lipid metabolism; glycerophospholipid metabolism. Catalyzes the formation of CDP-2,3-bis-(O-geranylgeranyl)-sn-glycerol (CDP-archaeol) from 2,3-bis-(O-geranylgeranyl)-sn-glycerol 1-phosphate (DGGGP) and CTP. This reaction is the third ether-bond-formation step in the biosynthesis of archaeal membrane lipids. The chain is CDP-archaeol synthase from Halobacterium salinarum (strain ATCC 29341 / DSM 671 / R1).